A 339-amino-acid chain; its full sequence is Glucokinase (339 aa).

16–21 (GDIGGT) provides a ligand contact to ATP.

Belongs to the bacterial glucokinase family.

It is found in the cytoplasm. The catalysed reaction is D-glucose + ATP = D-glucose 6-phosphate + ADP + H(+). The sequence is that of Glucokinase from Sinorhizobium medicae (strain WSM419) (Ensifer medicae).